A 383-amino-acid polypeptide reads, in one-letter code: D-alanine--D-alanine ligase (383 aa).

One can recognise an ATP-grasp domain in the interval 164–373 (KLAFQAAGLE…YSALIDELIT (210 aa)). 196–251 (VAELGFPVFVKPARAGSSFGITRVDEPSQLDAAIATAREHDLKLVVEAGIDGREIE) contributes to the ATP binding site. Residues D327, E340, and N342 each contribute to the Mg(2+) site.

The protein belongs to the D-alanine--D-alanine ligase family. It depends on Mg(2+) as a cofactor. The cofactor is Mn(2+).

The protein resides in the cytoplasm. It catalyses the reaction 2 D-alanine + ATP = D-alanyl-D-alanine + ADP + phosphate + H(+). It functions in the pathway cell wall biogenesis; peptidoglycan biosynthesis. Functionally, cell wall formation. In Kocuria rhizophila (strain ATCC 9341 / DSM 348 / NBRC 103217 / DC2201), this protein is D-alanine--D-alanine ligase.